Consider the following 102-residue polypeptide: ATP-dependent Clp protease adapter protein ClpS (102 aa).

It belongs to the ClpS family. In terms of assembly, binds to the N-terminal domain of the chaperone ClpA.

Involved in the modulation of the specificity of the ClpAP-mediated ATP-dependent protein degradation. The sequence is that of ATP-dependent Clp protease adapter protein ClpS from Dechloromonas aromatica (strain RCB).